The chain runs to 27 residues: Natriuretic peptides A (27 aa).

Cys7 and Cys23 are disulfide-bonded.

Belongs to the natriuretic peptide family.

It is found in the secreted. Hormone playing a key role in cardiovascular homeostasis through regulation of natriuresis, diuresis, and vasodilation. Has a cGMP-stimulating activity. The sequence is that of Natriuretic peptides A (nppa) from Anguilla japonica (Japanese eel).